Here is a 230-residue protein sequence, read N- to C-terminus: MNLFGKSNFNCVFSSSLDWFHSSRLSEKVGTKKNRICRETESFYALCLSHRRYLCYALEGLLPSRPRGRRASTYNCSDNLGYIRGLNGKQKQLIKKLVHICMIDGKKTRSRAIVYKTFHRLAPHGDVIKLLVNAIENVKPICEVKKVRISGTTRLVPSIIATNRQETLAIRWMLESAAKRRMGKKSISLDQCLYAEILEASQKMGIARKKRDDLHKLAEANRSFSHYRWW.

It belongs to the universal ribosomal protein uS7 family. In terms of assembly, part of the small ribosomal subunit.

It localises to the mitochondrion. One of the primary rRNA binding proteins, it binds directly to 18S rRNA where it nucleates assembly of the head domain of the small subunit. The protein is Small ribosomal subunit protein uS7m (RPS7) of Marchantia polymorpha (Common liverwort).